A 226-amino-acid polypeptide reads, in one-letter code: Urease accessory protein UreF (226 aa).

The protein belongs to the UreF family. In terms of assembly, ureD, UreF and UreG form a complex that acts as a GTP-hydrolysis-dependent molecular chaperone, activating the urease apoprotein by helping to assemble the nickel containing metallocenter of UreC. The UreE protein probably delivers the nickel.

The protein localises to the cytoplasm. In terms of biological role, required for maturation of urease via the functional incorporation of the urease nickel metallocenter. This chain is Urease accessory protein UreF, found in Burkholderia ambifaria (strain ATCC BAA-244 / DSM 16087 / CCUG 44356 / LMG 19182 / AMMD) (Burkholderia cepacia (strain AMMD)).